A 273-amino-acid polypeptide reads, in one-letter code: Formamidopyrimidine-DNA glycosylase (273 aa).

Catalysis depends on P2, which acts as the Schiff-base intermediate with DNA. E3 serves as the catalytic Proton donor. K58 functions as the Proton donor; for beta-elimination activity in the catalytic mechanism. DNA-binding residues include H91, R110, and R153. The FPG-type zinc finger occupies 238–272 (KVYGKEGQPCPRCGEDFVKIKICGRGTTYCLHCQK). R262 serves as the catalytic Proton donor; for delta-elimination activity.

It belongs to the FPG family. In terms of assembly, monomer. Zn(2+) is required as a cofactor.

It carries out the reaction Hydrolysis of DNA containing ring-opened 7-methylguanine residues, releasing 2,6-diamino-4-hydroxy-5-(N-methyl)formamidopyrimidine.. The enzyme catalyses 2'-deoxyribonucleotide-(2'-deoxyribose 5'-phosphate)-2'-deoxyribonucleotide-DNA = a 3'-end 2'-deoxyribonucleotide-(2,3-dehydro-2,3-deoxyribose 5'-phosphate)-DNA + a 5'-end 5'-phospho-2'-deoxyribonucleoside-DNA + H(+). Involved in base excision repair of DNA damaged by oxidation or by mutagenic agents. Acts as a DNA glycosylase that recognizes and removes damaged bases. Has a preference for oxidized purines, such as 7,8-dihydro-8-oxoguanine (8-oxoG). Has AP (apurinic/apyrimidinic) lyase activity and introduces nicks in the DNA strand. Cleaves the DNA backbone by beta-delta elimination to generate a single-strand break at the site of the removed base with both 3'- and 5'-phosphates. The polypeptide is Formamidopyrimidine-DNA glycosylase (Lactobacillus delbrueckii subsp. bulgaricus (strain ATCC BAA-365 / Lb-18)).